We begin with the raw amino-acid sequence, 281 residues long: Aliphatic sulfonates import ATP-binding protein SsuB (281 aa).

The ABC transporter domain occupies 40–263 (LTLRNLRKSF…RRGSADLAAL (224 aa)). Position 72-79 (72-79 (GRSGCGKS)) interacts with ATP.

The protein belongs to the ABC transporter superfamily. Aliphatic sulfonates importer (TC 3.A.1.17.2) family. As to quaternary structure, the complex is composed of two ATP-binding proteins (SsuB), two transmembrane proteins (SsuC) and a solute-binding protein (SsuA).

It is found in the cell inner membrane. The enzyme catalyses ATP + H2O + aliphatic sulfonate-[sulfonate-binding protein]Side 1 = ADP + phosphate + aliphatic sulfonateSide 2 + [sulfonate-binding protein]Side 1.. In terms of biological role, part of the ABC transporter complex SsuABC involved in aliphatic sulfonates import. Responsible for energy coupling to the transport system. The protein is Aliphatic sulfonates import ATP-binding protein SsuB of Rhodopseudomonas palustris (strain BisA53).